The primary structure comprises 130 residues: Large ribosomal subunit protein bL12 (130 aa).

This sequence belongs to the bacterial ribosomal protein bL12 family. In terms of assembly, homodimer. Part of the ribosomal stalk of the 50S ribosomal subunit. Forms a multimeric L10(L12)X complex, where L10 forms an elongated spine to which 2 to 4 L12 dimers bind in a sequential fashion. Binds GTP-bound translation factors.

In terms of biological role, forms part of the ribosomal stalk which helps the ribosome interact with GTP-bound translation factors. Is thus essential for accurate translation. In Nostoc sp. (strain PCC 7120 / SAG 25.82 / UTEX 2576), this protein is Large ribosomal subunit protein bL12.